A 193-amino-acid polypeptide reads, in one-letter code: ECF RNA polymerase sigma factor SigK (193 aa).

Positions 35–101 (LYDRTRSRVY…RRAVDRVRSE (67 aa)) are sigma-70 factor domain-2. Residues 59 to 62 (ETTQ) carry the Polymerase core binding motif. Residues 140–187 (MGSLSDLQREAIQLAYYEGLTYVQVSERLSANLATIKSRMRDGIRGLK) form a sigma-70 factor domain-4 region. Residues 161–180 (YVQVSERLSANLATIKSRMR) constitute a DNA-binding region (H-T-H motif).

Belongs to the sigma-70 factor family. ECF subfamily. In terms of assembly, interacts transiently with the RNA polymerase catalytic core formed by RpoA, RpoB, RpoC and RpoZ (2 alpha, 1 beta, 1 beta' and 1 omega subunit) to form the RNA polymerase holoenzyme that can initiate transcription. Interacts (via sigma-70 factor domain 4) with anti-sigma-K factor RskA.

Sigma factors are initiation factors that promote the attachment of RNA polymerase to specific initiation sites and are then released. Extracytoplasmic function (ECF) sigma factors are held in an inactive form by an anti-sigma factor until released by regulated intramembrane proteolysis. The protein is ECF RNA polymerase sigma factor SigK (sigK) of Mycobacterium sp. (strain JLS).